The primary structure comprises 430 residues: Glutamate-1-semialdehyde 2,1-aminomutase (430 aa).

K265 bears the N6-(pyridoxal phosphate)lysine mark.

It belongs to the class-III pyridoxal-phosphate-dependent aminotransferase family. HemL subfamily. Homodimer. The cofactor is pyridoxal 5'-phosphate.

The protein resides in the cytoplasm. It carries out the reaction (S)-4-amino-5-oxopentanoate = 5-aminolevulinate. Its pathway is porphyrin-containing compound metabolism; protoporphyrin-IX biosynthesis; 5-aminolevulinate from L-glutamyl-tRNA(Glu): step 2/2. The sequence is that of Glutamate-1-semialdehyde 2,1-aminomutase from Shewanella sp. (strain ANA-3).